Reading from the N-terminus, the 221-residue chain is Interleukin-12 subunit alpha (221 aa).

The signal sequence occupies residues 1–25 (MCPLRSLLLISTLVLLHHLPHLSLG). 3 disulfides stabilise this stretch: cysteine 39–cysteine 112, cysteine 66–cysteine 198, and cysteine 87–cysteine 125. Residue asparagine 95 is glycosylated (N-linked (GlcNAc...) asparagine).

This sequence belongs to the IL-6 superfamily. Heterodimer with IL12B; disulfide-linked. This heterodimer is known as interleukin IL-12. Heterodimer with EBI3/IL27B; not disulfide-linked. This heterodimer is known as interleukin IL-35. Interacts with NBR1; this interaction promotes IL-12 secretion.

The protein resides in the secreted. Heterodimerizes with IL12B to form the IL-12 cytokine or with EBI3/IL27B to form the IL-35 cytokine. IL-12 is primarily produced by professional antigen-presenting cells (APCs) such as B-cells and dendritic cells (DCs) as well as macrophages and granulocytes and regulates T-cell and natural killer-cell responses, induces the production of interferon-gamma (IFN-gamma), favors the differentiation of T-helper 1 (Th1) cells and is an important link between innate resistance and adaptive immunity. Mechanistically, exerts its biological effects through a receptor composed of IL12R1 and IL12R2 subunits. Binding to the receptor results in the rapid tyrosine phosphorylation of a number of cellular substrates including the JAK family kinases TYK2 and JAK2. In turn, recruited STAT4 gets phosphorylated and translocates to the nucleus where it regulates cytokine/growth factor responsive genes. As part of IL-35, plays essential roles in maintaining the immune homeostasis of the liver microenvironment and also functions as an immune-suppressive cytokine. Mediates biological events through unconventional receptors composed of IL12RB2 and gp130/IL6ST heterodimers or homodimers. Signaling requires the transcription factors STAT1 and STAT4, which form a unique heterodimer that binds to distinct DNA sites. This is Interleukin-12 subunit alpha (IL12A) from Bos taurus (Bovine).